The primary structure comprises 179 residues: ATP-dependent protease subunit HslV (179 aa).

T6 is an active-site residue. Residues S164, C167, and T170 each coordinate Na(+).

It belongs to the peptidase T1B family. HslV subfamily. A double ring-shaped homohexamer of HslV is capped on each side by a ring-shaped HslU homohexamer. The assembly of the HslU/HslV complex is dependent on binding of ATP.

The protein resides in the cytoplasm. It carries out the reaction ATP-dependent cleavage of peptide bonds with broad specificity.. Its activity is regulated as follows. Allosterically activated by HslU binding. Protease subunit of a proteasome-like degradation complex believed to be a general protein degrading machinery. This is ATP-dependent protease subunit HslV from Listeria innocua serovar 6a (strain ATCC BAA-680 / CLIP 11262).